Consider the following 542-residue polypeptide: Carboxypeptidase Y (542 aa).

A signal peptide spans 1–21 (MKLSKSTLIATLALTATSTNA). Positions 22–127 (LVVQNPFSNI…DAQVPNHKLR (106 aa)) are excised as a propeptide. Cystine bridges form between cysteine 182–cysteine 421, cysteine 316–cysteine 330, cysteine 340–cysteine 363, cysteine 347–cysteine 356, and cysteine 385–cysteine 391. Asparagine 213 is a glycosylation site (N-linked (GlcNAc...) asparagine). The active site involves serine 269. A glycan (N-linked (GlcNAc...) asparagine) is linked at asparagine 291. Aspartate 461 is a catalytic residue. Residue cysteine 464 participates in substrate binding. Histidine 518 is a catalytic residue. Methionine 519 lines the substrate pocket.

Belongs to the peptidase S10 family.

The protein localises to the vacuole. It catalyses the reaction Release of a C-terminal amino acid with broad specificity.. Involved in degradation of small peptides. The sequence is that of Carboxypeptidase Y (CPY1) from Candida albicans (Yeast).